Reading from the N-terminus, the 130-residue chain is Histone H2A type 1 (130 aa).

A disordered region spans residues 1–22; sequence MSGRGKQGGKARAKAKSRSSRA. Serine 2 is subject to N-acetylserine. Residue serine 2 is modified to Phosphoserine; by RPS6KA5. Arginine 4 is modified (citrulline; alternate). Residue arginine 4 is modified to Symmetric dimethylarginine; by PRMT5; alternate. Lysine 6 carries the N6-(2-hydroxyisobutyryl)lysine modification. Residues 7–19 are compositionally biased toward basic residues; that stretch reads QGGKARAKAKSRS. Lysine 10 carries the N6-(2-hydroxyisobutyryl)lysine; alternate modification. Residue lysine 10 is modified to N6-lactoyllysine; alternate. Position 10 is an N6-succinyllysine; alternate (lysine 10). Glycyl lysine isopeptide (Lys-Gly) (interchain with G-Cter in ubiquitin) cross-links involve residues lysine 14 and lysine 16. Lysine 37 carries the post-translational modification N6-(2-hydroxyisobutyryl)lysine; alternate. The residue at position 37 (lysine 37) is an N6-(beta-hydroxybutyryl)lysine; alternate. Lysine 37 carries the post-translational modification N6-crotonyllysine; alternate. N6-(2-hydroxyisobutyryl)lysine occurs at positions 75 and 76. Lysine 96 is modified (N6-(2-hydroxyisobutyryl)lysine; alternate). Lysine 96 carries the post-translational modification N6-succinyllysine; alternate. An N6-glutaryllysine; alternate modification is found at lysine 96. Lysine 100 is modified (N6-glutaryllysine). Glutamine 105 is modified (N5-methylglutamine). Residue lysine 119 is modified to N6-(2-hydroxyisobutyryl)lysine; alternate. An N6-crotonyllysine; alternate mark is found at lysine 119 and lysine 120. N6-glutaryllysine; alternate occurs at positions 119 and 120. Residue lysine 120 forms a Glycyl lysine isopeptide (Lys-Gly) (interchain with G-Cter in ubiquitin); alternate linkage. Threonine 121 carries the phosphothreonine; by DCAF1 modification. N6-crotonyllysine; alternate is present on lysine 126. Lysine 126 carries the post-translational modification N6-glutaryllysine; alternate.

The protein belongs to the histone H2A family. The nucleosome is a histone octamer containing two molecules each of H2A, H2B, H3 and H4 assembled in one H3-H4 heterotetramer and two H2A-H2B heterodimers. The octamer wraps approximately 147 bp of DNA. Interacts with VRK1; the interaction is mediated by the nucleosome acidic patch, a cluster of negatively charged residues of H2A and H2B forming a cleft within the nucleosome core. Deiminated on Arg-4 in granulocytes upon calcium entry. In terms of processing, monoubiquitination of Lys-120 (H2AK119Ub) by RING1, TRIM37 and RNF2/RING2 complex gives a specific tag for epigenetic transcriptional repression and participates in X chromosome inactivation of female mammals. It is involved in the initiation of both imprinted and random X inactivation. Ubiquitinated H2A is enriched in inactive X chromosome chromatin. Ubiquitination of H2A functions downstream of methylation of 'Lys-27' of histone H3 (H3K27me). H2AK119Ub by RNF2/RING2 can also be induced by ultraviolet and may be involved in DNA repair. Following DNA double-strand breaks (DSBs), it is ubiquitinated through 'Lys-63' linkage of ubiquitin moieties by the E2 ligase UBE2N and the E3 ligases RNF8 and RNF168, leading to the recruitment of repair proteins to sites of DNA damage. Ubiquitination at Lys-14 and Lys-16 (H2AK13Ub and H2AK15Ub, respectively) in response to DNA damage is initiated by RNF168 that mediates monoubiquitination at these 2 sites, and 'Lys-63'-linked ubiquitin are then conjugated to monoubiquitin; RNF8 is able to extend 'Lys-63'-linked ubiquitin chains in vitro. H2AK119Ub and ionizing radiation-induced 'Lys-63'-linked ubiquitination (H2AK13Ub and H2AK15Ub) are distinct events. Post-translationally, phosphorylation on Ser-2 (H2AS1ph) is enhanced during mitosis. Phosphorylation on Ser-2 by RPS6KA5/MSK1 directly represses transcription. Acetylation of H3 inhibits Ser-2 phosphorylation by RPS6KA5/MSK1. Phosphorylation at Thr-121 (H2AT120ph) by DCAF1 is present in the regulatory region of many tumor suppresor genes and down-regulates their transcription. Symmetric dimethylation on Arg-4 by the PRDM1/PRMT5 complex may play a crucial role in the germ-cell lineage. In terms of processing, glutamine methylation at Gln-105 (H2AQ104me) by FBL is specifically dedicated to polymerase I. It is present at 35S ribosomal DNA locus and impairs binding of the FACT complex. Post-translationally, crotonylation (Kcr) is specifically present in male germ cells and marks testis-specific genes in post-meiotic cells, including X-linked genes that escape sex chromosome inactivation in haploid cells. Crotonylation marks active promoters and enhancers and confers resistance to transcriptional repressors. It is also associated with post-meiotically activated genes on autosomes. Lactylated in macrophages by EP300/P300 by using lactoyl-CoA directly derived from endogenous or exogenous lactate, leading to stimulates gene transcription.

The protein localises to the nucleus. The protein resides in the chromosome. Core component of nucleosome. Nucleosomes wrap and compact DNA into chromatin, limiting DNA accessibility to the cellular machineries which require DNA as a template. Histones thereby play a central role in transcription regulation, DNA repair, DNA replication and chromosomal stability. DNA accessibility is regulated via a complex set of post-translational modifications of histones, also called histone code, and nucleosome remodeling. The chain is Histone H2A type 1 from Rattus norvegicus (Rat).